The chain runs to 509 residues: 2,3-bisphosphoglycerate-independent phosphoglycerate mutase (509 aa).

Residues D14 and S64 each contribute to the Mn(2+) site. Catalysis depends on S64, which acts as the Phosphoserine intermediate. Residues H125, 155–156 (RD), R187, R193, 259–262 (RADR), and K332 contribute to the substrate site. Mn(2+) contacts are provided by D399, H403, D440, H441, and H459.

This sequence belongs to the BPG-independent phosphoglycerate mutase family. As to quaternary structure, monomer. The cofactor is Mn(2+).

It carries out the reaction (2R)-2-phosphoglycerate = (2R)-3-phosphoglycerate. It functions in the pathway carbohydrate degradation; glycolysis; pyruvate from D-glyceraldehyde 3-phosphate: step 3/5. In terms of biological role, catalyzes the interconversion of 2-phosphoglycerate and 3-phosphoglycerate. The protein is 2,3-bisphosphoglycerate-independent phosphoglycerate mutase of Aeromonas salmonicida (strain A449).